The sequence spans 2194 residues: Glutamate synthase [NADH], amyloplastic (2194 aa).

Residues 1–101 constitute an amyloplast transit peptide; the sequence is MSNSLSLTFT…LYDPAFDKDS (101 aa). Residue Cys102 is the Nucleophile of the active site. The Glutamine amidotransferase type-2 domain occupies 102–503; sequence CGVGFVAELN…PGMMLLVDFE (402 aa). Residues 1021-1045 form a disordered region; it reads GGKSNTGEGGEQPSRMEPLADGSRN. FMN is bound at residue 1193 to 1250; sequence LAETHQTLVANDLRGRTTLQTDGQLKTGRDVAIAALLGAEEYGFSTAPLITLGCIMMR. Cys1246, Cys1252, and Cys1257 together coordinate [3Fe-4S] cluster. 1974 to 1988 lines the NAD(+) pocket; it reads GGGDTGTDCIGTSIR.

Belongs to the glutamate synthase family. As to quaternary structure, monomer. [3Fe-4S] cluster serves as cofactor. The cofactor is FAD. Requires FMN as cofactor. In terms of tissue distribution, expressed in infected cells in root nodules. Barely detected in roots and stems.

It is found in the plastid. The protein localises to the amyloplast. The catalysed reaction is 2 L-glutamate + NAD(+) = L-glutamine + 2-oxoglutarate + NADH + H(+). Its pathway is amino-acid biosynthesis; L-glutamate biosynthesis via GLT pathway; L-glutamate from 2-oxoglutarate and L-glutamine (NAD(+) route): step 1/1. The protein operates within energy metabolism; nitrogen metabolism. With respect to regulation, inhibited by malate, citrate, glutamate, NAD(+) and azaserine, but not by 2-2' dipyridil and N-ethylmaleimide. Required for the assimilation of symbiotically fixed nitrogen into amino acids in root nodules. In Medicago sativa (Alfalfa), this protein is Glutamate synthase [NADH], amyloplastic.